The sequence spans 344 residues: L-rhamnose-proton symporter (344 aa).

The next 10 membrane-spanning stretches (helical) occupy residues 4 to 24 (AITM…CFYA), 38 to 58 (WSVG…AILL), 72 to 92 (TLLP…NYGL), 101 to 121 (MGIG…TPIL), 137 to 157 (TLLG…AGQL), 175 to 195 (LVLA…MNAA), 214 to 234 (LPSY…FCFI), 259 to 279 (VLLS…YAWG), 290 to 310 (MSWM…GLVL), and 321 to 341 (VGVL…VGLG).

It belongs to the L-rhamnose transporter (TC 2.A.7.6) family.

The protein resides in the cell inner membrane. The catalysed reaction is L-rhamnopyranose(in) + H(+)(in) = L-rhamnopyranose(out) + H(+)(out). Functionally, uptake of L-rhamnose across the cytoplasmic membrane with the concomitant transport of protons into the cell (symport system). The chain is L-rhamnose-proton symporter from Enterobacter sp. (strain 638).